Consider the following 127-residue polypeptide: Large-conductance mechanosensitive channel (127 aa).

3 helical membrane-spanning segments follow: residues 9–29, 32–52, and 75–95; these read EFAMRGNVMDLAVAVVMGVAF, IVTALVDGIIMPCVGLLLGGI, and VIDFIIVAFAIFVLIKLINLL.

It belongs to the MscL family. Homopentamer.

The protein localises to the cell inner membrane. Channel that opens in response to stretch forces in the membrane lipid bilayer. May participate in the regulation of osmotic pressure changes within the cell. This Legionella pneumophila subsp. pneumophila (strain Philadelphia 1 / ATCC 33152 / DSM 7513) protein is Large-conductance mechanosensitive channel.